Reading from the N-terminus, the 29-residue chain is MDIVSLAWAGLMVVFTFSLSLVVWGRSGL.

Residues 3–23 (IVSLAWAGLMVVFTFSLSLVV) form a helical membrane-spanning segment.

It belongs to the PetN family. As to quaternary structure, the 4 large subunits of the cytochrome b6-f complex are cytochrome b6, subunit IV (17 kDa polypeptide, PetD), cytochrome f and the Rieske protein, while the 4 small subunits are PetG, PetL, PetM and PetN. The complex functions as a dimer.

It localises to the plastid. It is found in the chloroplast thylakoid membrane. Its function is as follows. Component of the cytochrome b6-f complex, which mediates electron transfer between photosystem II (PSII) and photosystem I (PSI), cyclic electron flow around PSI, and state transitions. The chain is Cytochrome b6-f complex subunit 8 from Arabis hirsuta (Hairy rock-cress).